Reading from the N-terminus, the 350-residue chain is MLISQRPTLSEETVADNRSRFVIEPLEPGFGYTLGNSLRRTLLSSIPGAAVTSIRIDGVLHEFTTVPGVKEDVTDIILNLKSLVVSSEEDEPVTMYLRKQGPGEVTAGDIVPPAGVTVHNPEMHIATLNDKGKLEVELVVERGRGYVPAVQNKASGAEIGRIPVDSIYSPVLKVTYKVEATRVEQRTDFDKLILDVETKNSITPRDALASAGKTLVELFGLARELNVEAEGIEIGPSPAEADHIASFALPIDDLDLTVRSYNCLKREGVHTVGELVARTESDLLDIRNFGQKSIDEVKIKLHQLGLSLKDSPATFDPSEVAGYDAATGTWNSDAGYDLEDNQDYAETEQL.

The tract at residues 1–226 (MLISQRPTLS…ELFGLARELN (226 aa)) is alpha N-terminal domain (alpha-NTD). The tract at residues 241–350 (ADHIASFALP…NQDYAETEQL (110 aa)) is alpha C-terminal domain (alpha-CTD). Residues 326 to 350 (ATGTWNSDAGYDLEDNQDYAETEQL) form a disordered region. Over residues 336-350 (YDLEDNQDYAETEQL) the composition is skewed to acidic residues.

This sequence belongs to the RNA polymerase alpha chain family. In terms of assembly, homodimer. The RNAP catalytic core consists of 2 alpha, 1 beta, 1 beta' and 1 omega subunit. When a sigma factor is associated with the core the holoenzyme is formed, which can initiate transcription.

The catalysed reaction is RNA(n) + a ribonucleoside 5'-triphosphate = RNA(n+1) + diphosphate. Functionally, DNA-dependent RNA polymerase catalyzes the transcription of DNA into RNA using the four ribonucleoside triphosphates as substrates. This chain is DNA-directed RNA polymerase subunit alpha, found in Mycobacterium sp. (strain JLS).